A 123-amino-acid chain; its full sequence is MAKIKARDLRGKKKEELLKHVDDLKVELSQLRVAKVTGGAASKLSKIRVVRKSIARVLTVINQTQKENLRKFYKGKKYKPLDLRPRKTRAIRRQLTKHEQGLMTKKMQRRSRLYSMRKFAVKA.

It belongs to the universal ribosomal protein uL29 family. As to quaternary structure, component of the large ribosomal subunit.

Its subcellular location is the cytoplasm. In terms of biological role, component of the large ribosomal subunit. The ribosome is a large ribonucleoprotein complex responsible for the synthesis of proteins in the cell. The polypeptide is Large ribosomal subunit protein uL29 (rpl35) (Ictalurus punctatus (Channel catfish)).